A 332-amino-acid polypeptide reads, in one-letter code: uncharacterized protein (332 aa).

Positions 159-256 (PLEISGRGGN…PRPHPWGPGP (98 aa)) are disordered. Over residues 201–231 (RPPSPRPPSPRPPHPRPPSPRPPHPRPPSPR) the composition is skewed to pro residues.

It is found in the virion. This is an uncharacterized protein from Acanthamoeba polyphaga (Amoeba).